The following is a 171-amino-acid chain: Disulfide bond formation protein B (171 aa).

The Cytoplasmic portion of the chain corresponds to 1 to 8 (MRLSYRLV). The helical transmembrane segment at 9–25 (SGLLVLASIVGMSFALY) threads the bilayer. Topologically, residues 26-43 (LEHVKGLEPCPLCIFQRV) are periplasmic. A disulfide bridge connects residues C35 and C38. The chain crosses the membrane as a helical span at residues 44-60 (GLMAMGFVALIAFLHNP). Topologically, residues 61-67 (VSNAIKR) are cytoplasmic. A helical transmembrane segment spans residues 68 to 85 (FYAFLAGVAILWSVGVAG). Residues 86-142 (RHVWLQHLPPDQVPSCGPGLNYLIDALPMKTVLQEVLSGSGECAAIDWTFLGQSLPV) lie on the Periplasmic side of the membrane. The cysteines at positions 101 and 128 are disulfide-linked. The chain crosses the membrane as a helical span at residues 143-161 (WSLAYFLLLLLVCLWQLFR). At 162–171 (FYPVFKTAKK) the chain is on the cytoplasmic side.

This sequence belongs to the DsbB family.

The protein resides in the cell inner membrane. In terms of biological role, required for disulfide bond formation in some periplasmic proteins. Acts by oxidizing the DsbA protein. The sequence is that of Disulfide bond formation protein B from Acinetobacter baumannii (strain ATCC 17978 / DSM 105126 / CIP 53.77 / LMG 1025 / NCDC KC755 / 5377).